Here is a 56-residue protein sequence, read N- to C-terminus: Large ribosomal subunit protein bL32 (56 aa).

The interval 1–21 (MAVQQNRKTRSRRGMRRSHDA) is disordered. Positions 7-16 (RKTRSRRGMR) are enriched in basic residues.

The protein belongs to the bacterial ribosomal protein bL32 family.

This is Large ribosomal subunit protein bL32 from Vibrio cholerae serotype O1 (strain ATCC 39541 / Classical Ogawa 395 / O395).